A 404-amino-acid chain; its full sequence is Glycerol-1-phosphate dehydrogenase [NAD(P)+] (404 aa).

Residues aspartate 56, 118-122 (GTIHD), and 140-143 (TAPS) each bind NAD(+). Aspartate 145 is a binding site for substrate. Serine 149 serves as a coordination point for NAD(+). Residue aspartate 192 participates in substrate binding. Residues aspartate 192 and histidine 272 each coordinate Ni(2+). Residue histidine 276 participates in substrate binding. Ni(2+) is bound at residue histidine 292.

Belongs to the glycerol-1-phosphate dehydrogenase family. In terms of assembly, homodimer. Requires Ni(2+) as cofactor.

The protein resides in the cytoplasm. It catalyses the reaction sn-glycerol 1-phosphate + NAD(+) = dihydroxyacetone phosphate + NADH + H(+). It carries out the reaction sn-glycerol 1-phosphate + NADP(+) = dihydroxyacetone phosphate + NADPH + H(+). Its function is as follows. Catalyzes the NAD(P)H-dependent reduction of dihydroxyacetonephosphate (DHAP or glycerone phosphate) to glycerol 1-phosphate (G1P). The G1P thus generated is probably used for the synthesis of phosphoglycerolipids in Gram-positive bacterial species. This Geobacillus stearothermophilus (Bacillus stearothermophilus) protein is Glycerol-1-phosphate dehydrogenase [NAD(P)+].